The sequence spans 464 residues: Eukaryotic translation initiation factor 5 (464 aa).

Position 9 is a phosphoserine (Ser9). 28 to 35 is a binding site for GTP; that stretch reads GKGNGIKT. Disordered stretches follow at residues 145 to 203 and 409 to 464; these read NPPS…ASQT and EEES…IDDI. Positions 174–184 are enriched in polar residues; that stretch reads ADGSMTNNSLA. The region spanning 254-415 is the W2 domain; sequence DKTEKERIDI…KNAEEESSES (162 aa). 2 stretches are compositionally biased toward acidic residues: residues 410–427 and 451–464; these read EESS…EEDN and GDED…IDDI. Residues Ser412, Ser413, and Ser415 each carry the phosphoserine modification.

Belongs to the eIF-2-beta/eIF-5 family.

Functionally, catalyzes the hydrolysis of GTP bound to the 40S ribosomal initiation complex (40S.mRNA.Met-tRNA[F].eIF-2.GTP) with the subsequent joining of a 60S ribosomal subunit resulting in the release of eIF-2 and the guanine nucleotide. The subsequent joining of a 60S ribosomal subunit results in the formation of a functional 80S initiation complex (80S.mRNA.Met-tRNA[F]). This is Eukaryotic translation initiation factor 5 (eIF5) from Drosophila melanogaster (Fruit fly).